We begin with the raw amino-acid sequence, 98 residues long: NADH-ubiquinone oxidoreductase chain 4L (98 aa).

Helical transmembrane passes span 1–21 (MVLIKLNIIMAFMLALTGVLI), 36–56 (MMLSLFIFMAAVITHFHMFSI), and 61–81 (LILLVFSACEAGVGLALLVTI).

This sequence belongs to the complex I subunit 4L family. In terms of assembly, core subunit of respiratory chain NADH dehydrogenase (Complex I) which is composed of 45 different subunits.

Its subcellular location is the mitochondrion inner membrane. The enzyme catalyses a ubiquinone + NADH + 5 H(+)(in) = a ubiquinol + NAD(+) + 4 H(+)(out). Core subunit of the mitochondrial membrane respiratory chain NADH dehydrogenase (Complex I) which catalyzes electron transfer from NADH through the respiratory chain, using ubiquinone as an electron acceptor. Part of the enzyme membrane arm which is embedded in the lipid bilayer and involved in proton translocation. The polypeptide is NADH-ubiquinone oxidoreductase chain 4L (MT-ND4L) (Metachirus nudicaudatus (Brown four-eyed opossum)).